A 141-amino-acid chain; its full sequence is Transmembrane protein 216 (141 aa).

A run of 4 helical transmembrane segments spans residues I15–F35, L49–F69, L82–L102, and S115–F135.

As to quaternary structure, part of the tectonic-like complex (also named B9 complex). Interacts with TMEM107.

The protein resides in the membrane. It localises to the cytoplasm. Its subcellular location is the cytoskeleton. The protein localises to the cilium basal body. Functionally, part of the tectonic-like complex which is required for tissue-specific ciliogenesis and may regulate ciliary membrane composition. This chain is Transmembrane protein 216 (TMEM216), found in Bos taurus (Bovine).